The following is a 463-amino-acid chain: L-2-hydroxyglutarate dehydrogenase, mitochondrial (463 aa).

Residues 1-51 (MVPALRYLVGACGRARGLFAGGSPGACGFASGRPRPLCGGSRSASTSSFDI) constitute a mitochondrion transit peptide. N6-acetyllysine occurs at positions 104, 155, and 173.

This sequence belongs to the L2HGDH family. FAD is required as a cofactor. As to expression, widely expressed. Highly expressed in brain, testis and muscle. Expressed to a lower extent in lymphocytes, fibroblasts, keratinocytes, placenta, bladder, small intestine, liver and bone marrow.

It localises to the mitochondrion. The enzyme catalyses (S)-2-hydroxyglutarate + A = 2-oxoglutarate + AH2. This Homo sapiens (Human) protein is L-2-hydroxyglutarate dehydrogenase, mitochondrial (L2HGDH).